The sequence spans 94 residues: MAPLKMLALVTLLLGASLQHIHAARGTNVGRECCLEYFKGAIPLRKLKTWYQTSEDCSRDAIVFVTVQGRAICSDPNNKRVKNAVKYLQSLERS.

The first 23 residues, 1–23 (MAPLKMLALVTLLLGASLQHIHA), serve as a signal peptide directing secretion. Cystine bridges form between Cys-33-Cys-57 and Cys-34-Cys-73.

It belongs to the intercrine beta (chemokine CC) family. As to expression, constitutively expressed in thymus. Detected at lower levels in the lung, colon and small intestine. Expressed in stimulated peripheral blood mononuclear cells, but not in resting cells.

It is found in the secreted. In terms of biological role, chemokine, which displays chemotactic activity for T lymphocytes, preferentially Th2 cells, but not monocytes or granulocytes. Therefore plays an important role in a wide range of inflammatory and immunological processes. Acts by binding to CCR4 at T-cell surface. Mediates GM-CSF/CSF2-driven pain and inflammation. In the brain, required to maintain the typical, highly branched morphology of hippocampal microglia under homeostatic conditions. May be important for the appropriate adaptation of microglial morphology and synaptic plasticity to acute lipopolysaccharide (LPS)-induced neuroinflammation. Plays a role in wound healing, mainly by inducing fibroblast migration into the wound. The polypeptide is C-C motif chemokine 17 (CCL17) (Homo sapiens (Human)).